The chain runs to 149 residues: Putative pre-16S rRNA nuclease (149 aa).

The protein belongs to the YqgF nuclease family.

It localises to the cytoplasm. Functionally, could be a nuclease involved in processing of the 5'-end of pre-16S rRNA. The sequence is that of Putative pre-16S rRNA nuclease from Burkholderia orbicola (strain MC0-3).